The following is a 512-amino-acid chain: Catalase (512 aa).

Residues His-60 and Asn-133 contribute to the active site. Position 344 (Tyr-344) interacts with heme. Ser-363 carries the post-translational modification Phosphoserine. The span at Glu-488–Pro-505 shows a compositional bias: basic and acidic residues. Positions Glu-488–Ser-512 are disordered.

It belongs to the catalase family. Heme serves as cofactor.

The protein resides in the peroxisome matrix. It catalyses the reaction 2 H2O2 = O2 + 2 H2O. Its function is as follows. Catalyzes the degradation of hydrogen peroxide (H(2)O(2)) generated by peroxisomal oxidases to water and oxygen, thereby protecting cells from the toxic effects of hydrogen peroxide. The polypeptide is Catalase (cta1) (Schizosaccharomyces pombe (strain 972 / ATCC 24843) (Fission yeast)).